Here is a 545-residue protein sequence, read N- to C-terminus: CTP synthase (545 aa).

Positions 1–266 are amidoligase domain; it reads MTTNYIFVTG…DDYICKRFSL (266 aa). Serine 14 is a binding site for CTP. Serine 14 serves as a coordination point for UTP. ATP contacts are provided by residues 15-20 and aspartate 72; that span reads SLGKGI. The Mg(2+) site is built by aspartate 72 and glutamate 140. CTP is bound by residues 147-149, 187-192, and lysine 223; these read DIE and KTKPTQ. Residues 187 to 192 and lysine 223 each bind UTP; that span reads KTKPTQ. An ATP-binding site is contributed by 239-241; sequence KDV. In terms of domain architecture, Glutamine amidotransferase type-1 spans 291–542; it reads TIGMVGKYIE…VKAASEFQKR (252 aa). Glycine 352 contacts L-glutamine. Cysteine 379 serves as the catalytic Nucleophile; for glutamine hydrolysis. L-glutamine is bound by residues 380–383, glutamate 403, and arginine 470; that span reads LGMQ. Active-site residues include histidine 515 and glutamate 517.

This sequence belongs to the CTP synthase family. Homotetramer.

It catalyses the reaction UTP + L-glutamine + ATP + H2O = CTP + L-glutamate + ADP + phosphate + 2 H(+). The enzyme catalyses L-glutamine + H2O = L-glutamate + NH4(+). It carries out the reaction UTP + NH4(+) + ATP = CTP + ADP + phosphate + 2 H(+). It participates in pyrimidine metabolism; CTP biosynthesis via de novo pathway; CTP from UDP: step 2/2. With respect to regulation, allosterically activated by GTP, when glutamine is the substrate; GTP has no effect on the reaction when ammonia is the substrate. The allosteric effector GTP functions by stabilizing the protein conformation that binds the tetrahedral intermediate(s) formed during glutamine hydrolysis. Inhibited by the product CTP, via allosteric rather than competitive inhibition. In terms of biological role, catalyzes the ATP-dependent amination of UTP to CTP with either L-glutamine or ammonia as the source of nitrogen. Regulates intracellular CTP levels through interactions with the four ribonucleotide triphosphates. In Shigella boydii serotype 18 (strain CDC 3083-94 / BS512), this protein is CTP synthase.